We begin with the raw amino-acid sequence, 549 residues long: Endoplasmic reticulum mannosyl-oligosaccharide 1,2-alpha-mannosidase (549 aa).

Over 1 to 4 (MKNS) the chain is Cytoplasmic. A helical; Signal-anchor for type II membrane protein membrane pass occupies residues 5 to 24 (VGISIATIVAIIAAIYYVPW). At 25–354 (YEHFERKSPG…LLASGSTEGL (330 aa)) the chain is on the lumenal side. N96, N155, and N224 each carry an N-linked (GlcNAc...) asparagine glycan. A disulfide bridge links C340 with C385. The active-site Proton donor is the E399. A disulfide bridge connects residues C468 and C471. T525 lines the Ca(2+) pocket.

The protein belongs to the glycosyl hydrolase 47 family. Homodimer. Ca(2+) serves as cofactor.

It is found in the endoplasmic reticulum membrane. It carries out the reaction N(4)-(alpha-D-Man-(1-&gt;2)-alpha-D-Man-(1-&gt;2)-alpha-D-Man-(1-&gt;3)-[alpha-D-Man-(1-&gt;2)-alpha-D-Man-(1-&gt;3)-[alpha-D-Man-(1-&gt;2)-alpha-D-Man-(1-&gt;6)]-alpha-D-Man-(1-&gt;6)]-beta-D-Man-(1-&gt;4)-beta-D-GlcNAc-(1-&gt;4)-beta-D-GlcNAc)-L-asparaginyl-[protein] (N-glucan mannose isomer 9A1,2,3B1,2,3) + 4 H2O = N(4)-(alpha-D-Man-(1-&gt;3)-[alpha-D-Man-(1-&gt;3)-[alpha-D-Man-(1-&gt;6)]-alpha-D-Man-(1-&gt;6)]-beta-D-Man-(1-&gt;4)-beta-D-GlcNAc-(1-&gt;4)-beta-D-GlcNAc)-L-asparaginyl-[protein] (N-glucan mannose isomer 5A1,2) + 4 beta-D-mannose. The catalysed reaction is N(4)-(alpha-D-Man-(1-&gt;2)-alpha-D-Man-(1-&gt;2)-alpha-D-Man-(1-&gt;3)-[alpha-D-Man-(1-&gt;3)-[alpha-D-Man-(1-&gt;2)-alpha-D-Man-(1-&gt;6)]-alpha-D-Man-(1-&gt;6)]-beta-D-Man-(1-&gt;4)-beta-D-GlcNAc-(1-&gt;4)-beta-D-GlcNAc)-L-asparaginyl-[protein] (N-glucan mannose isomer 8A1,2,3B1,3) + 3 H2O = N(4)-(alpha-D-Man-(1-&gt;3)-[alpha-D-Man-(1-&gt;3)-[alpha-D-Man-(1-&gt;6)]-alpha-D-Man-(1-&gt;6)]-beta-D-Man-(1-&gt;4)-beta-D-GlcNAc-(1-&gt;4)-beta-D-GlcNAc)-L-asparaginyl-[protein] (N-glucan mannose isomer 5A1,2) + 3 beta-D-mannose. It participates in protein modification; protein glycosylation. Involved in glycoprotein quality control as it is important for the targeting of misfolded glycoproteins for degradation. It primarily trims a single alpha-1,2-linked mannose residue from Man(9)GlcNAc(2) to produce Man(8)GlcNAc(2), but at high enzyme concentrations it further trims the carbohydrates to Man(5)GlcNAc(2). This chain is Endoplasmic reticulum mannosyl-oligosaccharide 1,2-alpha-mannosidase (MNS1), found in Saccharomyces cerevisiae (strain ATCC 204508 / S288c) (Baker's yeast).